A 361-amino-acid chain; its full sequence is Rhomboid domain-containing protein 2 (361 aa).

Transmembrane regions (helical) follow at residues serine 19–leucine 39, leucine 63–isoleucine 83, cysteine 100–valine 120, phenylalanine 158–isoleucine 178, and serine 182–tyrosine 202. Disordered regions lie at residues proline 265–histidine 287 and proline 318–proline 361. Composition is skewed to polar residues over residues tyrosine 267–serine 276 and proline 318–glutamine 328.

The protein belongs to the peptidase S54 family. Might form homotrimers; these trimers are only formed in retina. In terms of tissue distribution, widely expressed, including in retina and brain (at protein level), as well as in kidney, testis and ovary. Expressed in all layers of the retina, including inner segments of photoreceptor cells and ganglion cells (at protein level).

It is found in the golgi apparatus. It localises to the cis-Golgi network membrane. The chain is Rhomboid domain-containing protein 2 (Rhbdd2) from Mus musculus (Mouse).